Here is a 141-residue protein sequence, read N- to C-terminus: Small ribosomal subunit protein uS9c (141 aa).

It belongs to the universal ribosomal protein uS9 family.

The protein resides in the plastid. Its subcellular location is the chloroplast. The sequence is that of Small ribosomal subunit protein uS9c (rps9) from Tupiella akineta (Green alga).